Here is a 181-residue protein sequence, read N- to C-terminus: Large ribosomal subunit protein uL5 (181 aa).

Belongs to the universal ribosomal protein uL5 family. Part of the 50S ribosomal subunit; contacts the 5S rRNA and probably tRNA. Forms a bridge to the 30S subunit in the 70S ribosome.

This is one of the proteins that bind and probably mediate the attachment of the 5S RNA into the large ribosomal subunit, where it forms part of the central protuberance. In the 70S ribosome it contacts protein S13 of the 30S subunit (bridge B1b), connecting the 2 subunits; this bridge is implicated in subunit movement. May contact the P site tRNA; the 5S rRNA and some of its associated proteins might help stabilize positioning of ribosome-bound tRNAs. The sequence is that of Large ribosomal subunit protein uL5 from Methanococcus maripaludis (strain DSM 14266 / JCM 13030 / NBRC 101832 / S2 / LL).